Here is a 416-residue protein sequence, read N- to C-terminus: Esterase FrsA (416 aa).

The tract at residues 19–39 (ETSTLVRRTRHDQETQGLHST) is disordered.

The protein belongs to the FrsA family.

It catalyses the reaction a carboxylic ester + H2O = an alcohol + a carboxylate + H(+). In terms of biological role, catalyzes the hydrolysis of esters. The chain is Esterase FrsA from Pectobacterium atrosepticum (strain SCRI 1043 / ATCC BAA-672) (Erwinia carotovora subsp. atroseptica).